Consider the following 270-residue polypeptide: tRNA pseudouridine synthase A (270 aa).

Asp-60 serves as the catalytic Nucleophile. The tract at residues 107-111 (FHARF) is RNA binding. Tyr-118 contributes to the substrate binding site. Residues 168–172 (QCQSR) are interaction with tRNA.

It belongs to the tRNA pseudouridine synthase TruA family. In terms of assembly, homodimer.

The catalysed reaction is uridine(38/39/40) in tRNA = pseudouridine(38/39/40) in tRNA. Its function is as follows. Formation of pseudouridine at positions 38, 39 and 40 in the anticodon stem and loop of transfer RNAs. The protein is tRNA pseudouridine synthase A of Escherichia coli (strain K12 / DH10B).